A 158-amino-acid polypeptide reads, in one-letter code: MVKSEINNNGGEPVFAVLTQYLKDFSFENPSAPRSLRPREKAPQIDININVNANPIGDDNYDVVLSLSVKANDNNETLFHVELIYGGVFHIKDIPQEHIMPLVFIECPRLLFPFARQIISDATQNGGFPPLWIDPIDFAALFQKRVAEEQKNSQTQPS.

The protein belongs to the SecB family. As to quaternary structure, homotetramer, a dimer of dimers. One homotetramer interacts with 1 SecA dimer.

It is found in the cytoplasm. Functionally, one of the proteins required for the normal export of preproteins out of the cell cytoplasm. It is a molecular chaperone that binds to a subset of precursor proteins, maintaining them in a translocation-competent state. It also specifically binds to its receptor SecA. The sequence is that of Protein-export protein SecB from Bartonella quintana (strain Toulouse) (Rochalimaea quintana).